The sequence spans 574 residues: Arginine--tRNA ligase (574 aa).

The 'HIGH' region motif lies at 121–131 (PNIAKEMHIGH).

It belongs to the class-I aminoacyl-tRNA synthetase family. Monomer.

Its subcellular location is the cytoplasm. The enzyme catalyses tRNA(Arg) + L-arginine + ATP = L-arginyl-tRNA(Arg) + AMP + diphosphate. This chain is Arginine--tRNA ligase, found in Buchnera aphidicola subsp. Acyrthosiphon pisum (strain Tuc7).